A 508-amino-acid chain; its full sequence is Lysine--tRNA ligase (508 aa).

Mg(2+)-binding residues include Glu418 and Glu425.

Belongs to the class-II aminoacyl-tRNA synthetase family. Homodimer. Mg(2+) is required as a cofactor.

It is found in the cytoplasm. The catalysed reaction is tRNA(Lys) + L-lysine + ATP = L-lysyl-tRNA(Lys) + AMP + diphosphate. The sequence is that of Lysine--tRNA ligase from Burkholderia multivorans (strain ATCC 17616 / 249).